We begin with the raw amino-acid sequence, 72 residues long: Large ribosomal subunit protein uL29 (72 aa).

This sequence belongs to the universal ribosomal protein uL29 family.

The chain is Large ribosomal subunit protein uL29 (rpmC) from Treponema pallidum (strain Nichols).